The following is a 207-amino-acid chain: dTTP/UTP pyrophosphatase (207 aa).

The active-site Proton acceptor is Asp-79.

The protein belongs to the Maf family. YhdE subfamily. A divalent metal cation serves as cofactor.

Its subcellular location is the cytoplasm. The enzyme catalyses dTTP + H2O = dTMP + diphosphate + H(+). The catalysed reaction is UTP + H2O = UMP + diphosphate + H(+). In terms of biological role, nucleoside triphosphate pyrophosphatase that hydrolyzes dTTP and UTP. May have a dual role in cell division arrest and in preventing the incorporation of modified nucleotides into cellular nucleic acids. The polypeptide is dTTP/UTP pyrophosphatase (Rhodopseudomonas palustris (strain HaA2)).